We begin with the raw amino-acid sequence, 84 residues long: MSEVKRTQQGRVVSDKMDKSITVAIERFVKHPIYGKFVKRTTKVHAHDENNECGIGDTVEIAECRPLSKTKSWTLVKVVEKAKM.

The protein belongs to the universal ribosomal protein uS17 family. Part of the 30S ribosomal subunit.

Its function is as follows. One of the primary rRNA binding proteins, it binds specifically to the 5'-end of 16S ribosomal RNA. The protein is Small ribosomal subunit protein uS17 of Vibrio parahaemolyticus serotype O3:K6 (strain RIMD 2210633).